The following is a 474-amino-acid chain: Polyamine oxidase 7 (474 aa).

Residues 1-27 form the signal peptide; it reads MTKPTTMAIFLSIVLLSMAQLPSLVAG. FAD-binding residues include Glu-61 and Arg-69. N-linked (GlcNAc...) asparagine glycans are attached at residues Asn-103 and Asn-150. Val-261 lines the FAD pocket. A glycan (N-linked (GlcNAc...) asparagine) is linked at Asn-278. Glu-454 contacts FAD.

Belongs to the flavin monoamine oxidase family. FAD serves as cofactor.

It is found in the secreted. It localises to the extracellular space. Its subcellular location is the apoplast. The enzyme catalyses spermine + O2 + H2O = 3-aminopropanal + spermidine + H2O2. The catalysed reaction is N(1)-acetylspermine + O2 + H2O = 3-acetamidopropanal + spermidine + H2O2. It catalyses the reaction norspermine + O2 + H2O = norspermidine + 3-aminopropanal + H2O2. It carries out the reaction spermidine + O2 + H2O = 3-aminopropanal + putrescine + H2O2. The enzyme catalyses N(1)-acetylspermidine + O2 + H2O = 3-acetamidopropanal + putrescine + H2O2. The catalysed reaction is thermospermine + O2 + H2O = 3-aminopropanal + spermidine + H2O2. Its pathway is amine and polyamine degradation; spermidine degradation. It functions in the pathway amine and polyamine degradation; spermine degradation. In terms of biological role, flavoenzyme involved in polyamine back-conversion. Catalyzes the oxidation of the secondary amino group of polyamines, such as spermine, spermidine and their acetyl derivatives. Substrate preference is spermine &gt; spermidine &gt; N(1)-acetylspermine &gt; N(1)-acetylspermidine &gt; norspermine &gt; thermospermine. No activity detected when putrescine is used as substrate. May play a role in producing hydrogen peroxide for secondary wall thickening through lignin formation during anther development. This Oryza sativa subsp. japonica (Rice) protein is Polyamine oxidase 7.